The following is a 333-amino-acid chain: Probable tRNA pseudouridine synthase B (333 aa).

Asp66 serves as the catalytic Nucleophile. In terms of domain architecture, PUA spans 233-308 (LKKIIVKDSA…EVVEITRVIM (76 aa)).

Belongs to the pseudouridine synthase TruB family. Type 2 subfamily.

The enzyme catalyses uridine(55) in tRNA = pseudouridine(55) in tRNA. Its function is as follows. Could be responsible for synthesis of pseudouridine from uracil-55 in the psi GC loop of transfer RNAs. This is Probable tRNA pseudouridine synthase B from Methanococcus maripaludis (strain C6 / ATCC BAA-1332).